The primary structure comprises 248 residues: Probable transcriptional regulatory protein Acid345_2125 (248 aa).

Belongs to the TACO1 family.

It localises to the cytoplasm. The protein is Probable transcriptional regulatory protein Acid345_2125 of Koribacter versatilis (strain Ellin345).